Consider the following 137-residue polypeptide: Ribosomal RNA large subunit methyltransferase H (137 aa).

Residues Leu-56, Gly-85, and 104–109 (LSPLTL) each bind S-adenosyl-L-methionine.

Belongs to the RNA methyltransferase RlmH family. In terms of assembly, homodimer.

It is found in the cytoplasm. The enzyme catalyses pseudouridine(1915) in 23S rRNA + S-adenosyl-L-methionine = N(3)-methylpseudouridine(1915) in 23S rRNA + S-adenosyl-L-homocysteine + H(+). Functionally, specifically methylates the pseudouridine at position 1915 (m3Psi1915) in 23S rRNA. The sequence is that of Ribosomal RNA large subunit methyltransferase H from Thermus thermophilus (strain ATCC 27634 / DSM 579 / HB8).